A 484-amino-acid polypeptide reads, in one-letter code: MLPLPPAVTALSAPGKVLLTGGYLVLDRSYTGTVFALDARIHVIVQQLRRNHRREAASGSAHGRSDTPQAEGNVHGDKEDEGTIVVHSPQFVDAVWEYSIQRCEDGGGVLVKQRNDGPRNLFVETSLNFALTYISYVADSKDFGSLSITILADNDYYSETAFSKASGLRSSSRFVDFGVRLQEAHKTGLGSSAALVTALVSSLVIHRTMQPDDLGPGRDKLHNLAQAAHCAAQGKVGSGFDVAAAIYGSCLYRRFSPSILESVGDAGSPGFEERLFRIVEDADPQHPWDTECLDFGMKLPRGMQMVLCDVECGSQTPSMVRKVLEWRKQNQKEADMLWGALQSNNERLRLELRRLAQSPDEHTLSDFENVRTYIQRSRNHIRSMTQKSDVPIEPRVQTELLDALSELEGVIGGVVPGAGGYDAIVLLIQDNPDVITRLKAFFETWESKAEDDFGGKIGKVRLLGVRHGSEGVKNEMLEQYAGWV.

Positions 54–77 (REAASGSAHGRSDTPQAEGNVHGD) are disordered. 184–194 (AHKTGLGSSAA) provides a ligand contact to ATP.

It belongs to the GHMP kinase family. Mevalonate kinase subfamily.

The enzyme catalyses (R)-5-phosphomevalonate + ATP = (R)-5-diphosphomevalonate + ADP. It functions in the pathway isoprenoid biosynthesis; isopentenyl diphosphate biosynthesis via mevalonate pathway; isopentenyl diphosphate from (R)-mevalonate: step 2/3. Functionally, phosphomevalonate kinase; part of the second module of ergosterol biosynthesis pathway that includes the middle steps of the pathway. Erg8 converts 5-phosphomevalonate to 5-diphosphomevalonate. The second module is carried out in the vacuole and involves the formation of farnesyl diphosphate, which is also an important intermediate in the biosynthesis of ubiquinone, dolichol, heme and prenylated proteins. Activity by the mevalonate kinase erg12 (AFUA_4G07780) first converts mevalonate into 5-phosphomevalonate. 5-phosphomevalonate is then further converted to 5-diphosphomevalonate by the phosphomevalonate kinase erg8 (AFUA_5G10680). The diphosphomevalonate decarboxylase mvd1 (AFUA_4G07130) then produces isopentenyl diphosphate. The isopentenyl-diphosphate delta-isomerase idi1 (AFUA_6G11160) then catalyzes the 1,3-allylic rearrangement of the homoallylic substrate isopentenyl (IPP) to its highly electrophilic allylic isomer, dimethylallyl diphosphate (DMAPP). Finally the farnesyl diphosphate synthase erg20 (AFUA_5G02450) catalyzes the sequential condensation of isopentenyl pyrophosphate with dimethylallyl pyrophosphate, and then with the resultant geranylpyrophosphate to the ultimate product farnesyl pyrophosphate. The protein is Phosphomevalonate kinase erg8 of Aspergillus fumigatus (strain ATCC MYA-4609 / CBS 101355 / FGSC A1100 / Af293) (Neosartorya fumigata).